A 480-amino-acid polypeptide reads, in one-letter code: Uridine 5'-monophosphate synthase (480 aa).

Ala2 carries the N-acetylalanine modification. The interval 2–214 (AVARAALGPL…VFVAANHNGS (213 aa)) is OPRTase. Tyr37 bears the Phosphotyrosine mark. Position 214 is a phosphoserine (Ser214). Positions 215-220 (PLSIKE) are domain linker. The OMPdecase stretch occupies residues 221–480 (APKELSFGAR…WEAYLSRLGV (260 aa)). Residue Ser257 participates in orotidine 5'-phosphate binding. Residues Ser257, Asp259, and 281–283 (KTH) each bind UMP. Lys281 is an orotidine 5'-phosphate binding site. Catalysis depends on for OMPdecase activity residues Asp312, Lys314, and Asp317. Residues Lys314, Asp317, Thr321, Ser372, 430 to 432 (QQY), and 450 to 451 (GR) each bind orotidine 5'-phosphate. UMP-binding positions include Asp317, Thr321, Ser372, 430–432 (QQY), and 450–451 (GR).

This sequence in the N-terminal section; belongs to the purine/pyrimidine phosphoribosyltransferase family. In the C-terminal section; belongs to the OMP decarboxylase family. Homodimer; dimerization is required for enzymatic activity.

It catalyses the reaction orotidine 5'-phosphate + diphosphate = orotate + 5-phospho-alpha-D-ribose 1-diphosphate. The catalysed reaction is orotidine 5'-phosphate + H(+) = UMP + CO2. Its pathway is pyrimidine metabolism; UMP biosynthesis via de novo pathway; UMP from orotate: step 1/2. The protein operates within pyrimidine metabolism; UMP biosynthesis via de novo pathway; UMP from orotate: step 2/2. In terms of biological role, bifunctional enzyme catalyzing the last two steps of de novo pyrimidine biosynthesis, orotate phosphoribosyltransferase (OPRT), which converts orotate to orotidine-5'-monophosphate (OMP), and orotidine-5'-monophosphate decarboxylase (ODC), the terminal enzymatic reaction that decarboxylates OMP to uridine monophosphate (UMP). The chain is Uridine 5'-monophosphate synthase from Homo sapiens (Human).